The primary structure comprises 58 residues: ATP synthase F(0) complex subunit k, mitochondrial (58 aa).

K16 and K17 each carry N6-acetyllysine; partial. Residues 23–45 (TLTGRMNCVLATYGSIALIVLYF) traverse the membrane as a helical segment.

Component of the ATP synthase complex composed at least of ATP5F1A/subunit alpha, ATP5F1B/subunit beta, ATP5MC1/subunit c (homooctomer), MT-ATP6/subunit a, MT-ATP8/subunit 8, ATP5ME/subunit e, ATP5MF/subunit f, ATP5MG/subunit g, ATP5MK/subunit k, ATP5MJ/subunit j, ATP5F1C/subunit gamma, ATP5F1D/subunit delta, ATP5F1E/subunit epsilon, ATP5PF/subunit F6, ATP5PB/subunit b, ATP5PD/subunit d, ATP5PO/subunit OSCP. ATP synthase complex consists of a soluble F(1) head domain (subunits alpha(3) and beta(3)) - the catalytic core - and a membrane F(0) domain - the membrane proton channel (subunits c, a, 8, e, f, g, k and j). These two domains are linked by a central stalk (subunits gamma, delta, and epsilon) rotating inside the F1 region and a stationary peripheral stalk (subunits F6, b, d, and OSCP). The ATP synthase complex/complex V exists as a monomeric and a dimeric supercomplex that helps shape mitochondrial cristae to optimize proton flow.

It is found in the mitochondrion membrane. Subunit k, of the mitochondrial membrane ATP synthase complex (F(1)F(0) ATP synthase or Complex V) that produces ATP from ADP in the presence of a proton gradient across the membrane which is generated by electron transport complexes of the respiratory chain. ATP synthase complex consist of a soluble F(1) head domain - the catalytic core - and a membrane F(1) domain - the membrane proton channel. These two domains are linked by a central stalk rotating inside the F(1) region and a stationary peripheral stalk. During catalysis, ATP synthesis in the catalytic domain of F(1) is coupled via a rotary mechanism of the central stalk subunits to proton translocation. In vivo, can only synthesize ATP although its ATP hydrolase activity can be activated artificially in vitro. Part of the complex F(0) domain. Required for dimerization of the ATP synthase complex and as such regulates ATP synthesis in the mitochondria. In Bos taurus (Bovine), this protein is ATP synthase F(0) complex subunit k, mitochondrial.